Consider the following 682-residue polypeptide: L-type lectin-domain containing receptor kinase VI.2 (682 aa).

The first 26 residues, 1–26 (MGTQRSMFIVSFLFKLFLFLSVHVRA), serve as a signal peptide directing secretion. Topologically, residues 27 to 310 (QRTTTNFAFR…AKKEGLNSQV (284 aa)) are extracellular. The interval 29-277 (TTTNFAFRGF…AHYVMGWSFS (249 aa)) is legume-lectin like. Residues 311-331 (IVMIVALSAVMLVMLVLLFFF) traverse the membrane as a helical segment. The Cytoplasmic segment spans residues 332–682 (VMYKKRLGQE…RVSSTSRISQ (351 aa)). Positions 367-641 (FKKTGIIGTG…LRYLNGEENV (275 aa)) constitute a Protein kinase domain. ATP-binding positions include 373–381 (IGTGGFGTV) and K395. Residue D494 is the Proton acceptor of the active site.

It in the C-terminal section; belongs to the protein kinase superfamily. Ser/Thr protein kinase family. This sequence in the N-terminal section; belongs to the leguminous lectin family. As to expression, strongly expressed in the vascular system and trichomes of the leaves. Also expressed in guard cells, anthers, stigmas and germinating seeds, but not found in petals or roots. Increased susceptibility to the bacteria Pseudomonas syringae, characterized by stronger necrotic symptoms and higher bacterial proliferation.

The protein localises to the cell membrane. It catalyses the reaction L-seryl-[protein] + ATP = O-phospho-L-seryl-[protein] + ADP + H(+). It carries out the reaction L-threonyl-[protein] + ATP = O-phospho-L-threonyl-[protein] + ADP + H(+). In terms of biological role, involved in negative regulation of abscisic acid response in seed germination. Involved in resistance response to the pathogenic bacteria Pseudomonas syringae. This is L-type lectin-domain containing receptor kinase VI.2 from Arabidopsis thaliana (Mouse-ear cress).